Consider the following 218-residue polypeptide: Histone H1.1 (218 aa).

Residues 1-42 are disordered; that stretch reads MSEVALPAPAASTSPEKPSAGKKAKKPAKAAAAAKKKPAGPS. An N-acetylserine modification is found at Ser-2. Residues Ser-2 and Ser-12 each carry the phosphoserine modification. The residue at position 17 (Lys-17) is an N6-acetyllysine. Over residues 20-38 the composition is skewed to basic residues; that stretch reads AGKKAKKPAKAAAAAKKKP. Lys-37 is modified (N6-(beta-hydroxybutyryl)lysine). The 74-residue stretch at 39–112 folds into the H15 domain; sequence AGPSVSELIV…GASGSFKLNK (74 aa). The residue at position 44 (Ser-44) is a Phosphoserine. Lys-55 carries the N6-(beta-hydroxybutyryl)lysine modification. Residue Arg-57 is modified to Citrulline. Residue Lys-67 is modified to N6-(beta-hydroxybutyryl)lysine. Position 78 is an N6-acetyllysine (Lys-78). At Lys-88 the chain carries N6-(beta-hydroxybutyryl)lysine. Lys-93 carries the N6-(beta-hydroxybutyryl)lysine; alternate modification. Lys-93 is subject to N6-acetyllysine; alternate. A Phosphoserine; by PKC modification is found at Ser-107. An N6-(beta-hydroxybutyryl)lysine modification is found at Lys-109. The interval 116-218 is disordered; the sequence is SVDAKPTATK…KPKKAAPKKK (103 aa). The span at 119–149 shows a compositional bias: low complexity; that stretch reads AKPTATKVATKTKVTSASKKPKKASGAAAAK. Lys-125 carries the post-translational modification N6-acetyllysine. Composition is skewed to basic residues over residues 150-183 and 190-218; these read KSVK…KKVA and KAVK…PKKK. Position 206 is a phosphothreonine (Thr-206).

It belongs to the histone H1/H5 family. Interacts with DFFB. H1 histones are progressively phosphorylated during the cell cycle, becoming maximally phosphorylated during late G2 phase and M phase, and being dephosphorylated sharply thereafter. In terms of processing, citrullination at Arg-57 (H1R54ci) by PADI4 takes place within the DNA-binding site of H1 and results in its displacement from chromatin and global chromatin decondensation, thereby promoting pluripotency and stem cell maintenance.

Its subcellular location is the nucleus. The protein resides in the chromosome. Functionally, H1 histones bind to linker DNA between nucleosomes forming the macromolecular structure known as the chromatin fiber. H1 histones are necessary for the condensation of nucleosome chains into higher-order structured fibers. Also acts as a regulator of individual gene transcription through chromatin remodeling. The polypeptide is Histone H1.1 (Bos taurus (Bovine)).